We begin with the raw amino-acid sequence, 199 residues long: Prolactin (199 aa).

C4 and C11 are oxidised to a cystine. Phosphoserine occurs at positions 26, 34, and 90. 2 cysteine pairs are disulfide-bonded: C58–C174 and C191–C199.

Belongs to the somatotropin/prolactin family. Interacts with PRLR.

Its subcellular location is the secreted. Prolactin acts primarily on the mammary gland by promoting lactation. The sequence is that of Prolactin (PRL) from Balaenoptera borealis (Sei whale).